Here is a 1414-residue protein sequence, read N- to C-terminus: Phenyloxazoline synthase MbtB (1414 aa).

The 74-residue stretch at Thr5–Thr78 folds into the Carrier 1 domain. An O-(pantetheine 4'-phosphoryl)serine modification is found at Ser39. The condensation/cyclization stretch occupies residues Glu96–Thr394. The tract at residues Ser579–Ala975 is adenylation. The 79-residue stretch at Ala1057–Glu1135 folds into the Carrier 2 domain. Ser1094 is modified (O-(pantetheine 4'-phosphoryl)serine). The interval Gly1188–Val1413 is thioesterase.

The protein belongs to the ATP-dependent AMP-binding enzyme family. MbtB subfamily. It depends on pantetheine 4'-phosphate as a cofactor. Post-translationally, 4'-phosphopantetheine is transferred from CoA to a specific serine in each of the two carrier protein domains, leading to their activation from apo to holo forms.

Its pathway is siderophore biosynthesis; mycobactin biosynthesis. Its function is as follows. Involved in the initial steps of the mycobactin biosynthetic pathway. Putatively couples activated salicylic acid with serine or threonine and cyclizes this precursor to the hydroxyphenyloxazoline ring system present in this class of siderophores. Essential for growth in macrophages. This Mycobacterium tuberculosis (strain CDC 1551 / Oshkosh) protein is Phenyloxazoline synthase MbtB (mbtB).